Consider the following 154-residue polypeptide: Interleukin-2 (154 aa).

Residues 1-20 form the signal peptide; it reads MYKLQLLSCIALTLALVANS. Residue threonine 23 is glycosylated (O-linked (GalNAc...) threonine). An intrachain disulfide couples cysteine 78 to cysteine 126.

It belongs to the IL-2 family.

The protein resides in the secreted. Cytokine produced by activated CD4-positive helper T-cells and to a lesser extend activated CD8-positive T-cells and natural killer (NK) cells that plays pivotal roles in the immune response and tolerance. Binds to a receptor complex composed of either the high-affinity trimeric IL-2R (IL2RA/CD25, IL2RB/CD122 and IL2RG/CD132) or the low-affinity dimeric IL-2R (IL2RB and IL2RG). Interaction with the receptor leads to oligomerization and conformation changes in the IL-2R subunits resulting in downstream signaling starting with phosphorylation of JAK1 and JAK3. In turn, JAK1 and JAK3 phosphorylate the receptor to form a docking site leading to the phosphorylation of several substrates including STAT5. This process leads to activation of several pathways including STAT, phosphoinositide-3-kinase/PI3K and mitogen-activated protein kinase/MAPK pathways. Functions as a T-cell growth factor and can increase NK-cell cytolytic activity as well. Promotes strong proliferation of activated B-cells and subsequently immunoglobulin production. Plays a pivotal role in regulating the adaptive immune system by controlling the survival and proliferation of regulatory T-cells, which are required for the maintenance of immune tolerance. Moreover, participates in the differentiation and homeostasis of effector T-cell subsets, including Th1, Th2, Th17 as well as memory CD8-positive T-cells. The chain is Interleukin-2 (IL2) from Lama glama (Llama).